Consider the following 178-residue polypeptide: Single-stranded DNA-binding protein 2 (178 aa).

The SSB domain maps to 6-111 (VNKVILVGNL…VVVSQSGTMQ (106 aa)). Residues 55–61 (WHRVVLY) mediate DNA binding. The tract at residues 111–161 (QMLGGRNSAGSGQQQGGWGQPQQPAAPSHSGMPPQQHPANEPPMDFDDDIP) is disordered.

In terms of assembly, homotetramer.

This Salmonella typhi protein is Single-stranded DNA-binding protein 2 (ssb2).